The primary structure comprises 260 residues: 4-hydroxy-tetrahydrodipicolinate reductase (260 aa).

NAD(+)-binding positions include 8–13 (GAAGRM), Glu-35, 91–93 (GTT), and 115–118 (APNM). His-148 acts as the Proton donor/acceptor in catalysis. Residue His-149 coordinates (S)-2,3,4,5-tetrahydrodipicolinate. The active-site Proton donor is Lys-152. 158–159 (GT) contributes to the (S)-2,3,4,5-tetrahydrodipicolinate binding site.

Belongs to the DapB family.

The protein resides in the cytoplasm. The catalysed reaction is (S)-2,3,4,5-tetrahydrodipicolinate + NAD(+) + H2O = (2S,4S)-4-hydroxy-2,3,4,5-tetrahydrodipicolinate + NADH + H(+). The enzyme catalyses (S)-2,3,4,5-tetrahydrodipicolinate + NADP(+) + H2O = (2S,4S)-4-hydroxy-2,3,4,5-tetrahydrodipicolinate + NADPH + H(+). Its pathway is amino-acid biosynthesis; L-lysine biosynthesis via DAP pathway; (S)-tetrahydrodipicolinate from L-aspartate: step 4/4. In terms of biological role, catalyzes the conversion of 4-hydroxy-tetrahydrodipicolinate (HTPA) to tetrahydrodipicolinate. This is 4-hydroxy-tetrahydrodipicolinate reductase from Rubrobacter xylanophilus (strain DSM 9941 / JCM 11954 / NBRC 16129 / PRD-1).